The sequence spans 85 residues: ATP synthase epsilon chain (85 aa).

This sequence belongs to the ATPase epsilon chain family. In terms of assembly, F-type ATPases have 2 components, CF(1) - the catalytic core - and CF(0) - the membrane proton channel. CF(1) has five subunits: alpha(3), beta(3), gamma(1), delta(1), epsilon(1). CF(0) has three main subunits: a, b and c.

It is found in the cell membrane. Produces ATP from ADP in the presence of a proton gradient across the membrane. This Frankia casuarinae (strain DSM 45818 / CECT 9043 / HFP020203 / CcI3) protein is ATP synthase epsilon chain.